The following is a 306-amino-acid chain: Large ribosomal subunit protein bL19m (306 aa).

Basic and acidic residues predominate over residues 34 to 43; the sequence is ENQEEQKKEA. Positions 34–53 are disordered; that stretch reads ENQEEQKKEAPPTTPTSPVN.

It belongs to the bacterial ribosomal protein bL19 family. As to quaternary structure, component of the mitochondrial ribosome large subunit (39S) which comprises a 16S rRNA and about 50 distinct proteins.

The protein localises to the mitochondrion. This Drosophila melanogaster (Fruit fly) protein is Large ribosomal subunit protein bL19m (mRpL19).